The primary structure comprises 772 residues: Mitochondrial intermediate peptidase (772 aa).

The N-terminal 42 residues, 1 to 42, are a transit peptide targeting the mitochondrion; sequence MFANSARNALKKRPQNLQPFRFQGCLFSKRANRPLTTKVQHL. Residue histidine 556 participates in Zn(2+) binding. Residue glutamate 557 is part of the active site. Residues histidine 560 and histidine 563 each coordinate Zn(2+).

It belongs to the peptidase M3 family. Zn(2+) is required as a cofactor.

Its subcellular location is the mitochondrion matrix. It carries out the reaction Release of an N-terminal octapeptide as second stage of processing of some proteins imported into the mitochondrion.. Its function is as follows. Cleaves proteins, imported into the mitochondrion, to their mature size. While most mitochondrial precursor proteins are processed to the mature form in one step by mitochondrial processing peptidase (MPP), the sequential cleavage by MIP of an octapeptide after initial processing by MPP is a required step for a subgroup of nuclear-encoded precursor proteins destined for the matrix or the inner membrane. This is Mitochondrial intermediate peptidase (OCT1) from Laccaria bicolor (strain S238N-H82 / ATCC MYA-4686) (Bicoloured deceiver).